A 405-amino-acid polypeptide reads, in one-letter code: Tryptophan synthase beta chain (405 aa).

Lys-96 is subject to N6-(pyridoxal phosphate)lysine.

The protein belongs to the TrpB family. As to quaternary structure, tetramer of two alpha and two beta chains. It depends on pyridoxal 5'-phosphate as a cofactor.

The enzyme catalyses (1S,2R)-1-C-(indol-3-yl)glycerol 3-phosphate + L-serine = D-glyceraldehyde 3-phosphate + L-tryptophan + H2O. Its pathway is amino-acid biosynthesis; L-tryptophan biosynthesis; L-tryptophan from chorismate: step 5/5. In terms of biological role, the beta subunit is responsible for the synthesis of L-tryptophan from indole and L-serine. The chain is Tryptophan synthase beta chain from Clostridium botulinum (strain Eklund 17B / Type B).